The primary structure comprises 663 residues: UvrABC system protein B (663 aa).

A compositionally biased stretch (basic and acidic residues) spans 1–10 (MIDKRDDKPF). A disordered region spans residues 1 to 23 (MIDKRDDKPFKLKSKYKPSGDQP). A Helicase ATP-binding domain is found at 31–271 (DNIEGGEKAQ…EQSIAKIQAE (241 aa)). Residue 44–51 (GATGTGKT) coordinates ATP. Residues 97–120 (YYDYYQPEAYVPSSDTYIEKDSSV) carry the Beta-hairpin motif. Residues 435-601 (QIDDLLGEIN…TIKKDIRGLI (167 aa)) form the Helicase C-terminal domain. Residues 627–662 (KEAINALQKQMQEAAELLDFELAAQMRDLILELKLM) form the UVR domain.

Belongs to the UvrB family. In terms of assembly, forms a heterotetramer with UvrA during the search for lesions. Interacts with UvrC in an incision complex.

It is found in the cytoplasm. In terms of biological role, the UvrABC repair system catalyzes the recognition and processing of DNA lesions. A damage recognition complex composed of 2 UvrA and 2 UvrB subunits scans DNA for abnormalities. Upon binding of the UvrA(2)B(2) complex to a putative damaged site, the DNA wraps around one UvrB monomer. DNA wrap is dependent on ATP binding by UvrB and probably causes local melting of the DNA helix, facilitating insertion of UvrB beta-hairpin between the DNA strands. Then UvrB probes one DNA strand for the presence of a lesion. If a lesion is found the UvrA subunits dissociate and the UvrB-DNA preincision complex is formed. This complex is subsequently bound by UvrC and the second UvrB is released. If no lesion is found, the DNA wraps around the other UvrB subunit that will check the other stand for damage. The chain is UvrABC system protein B from Streptococcus pyogenes serotype M5 (strain Manfredo).